We begin with the raw amino-acid sequence, 302 residues long: DNA-binding transcriptional activator HetR (302 aa).

The active site involves S153.

The protein belongs to the peptidase S48 family. As to quaternary structure, homodimer; disulfide-linked.

In terms of biological role, might be involved in temporal and/or spatial regulation of nitrogen fixation. Dimerization is required for DNA-binding. Has both a protease and a DNA-binding activity. The sequence is that of DNA-binding transcriptional activator HetR from Trichodesmium erythraeum (strain IMS101).